Here is a 1655-residue protein sequence, read N- to C-terminus: Outer membrane protein B (1655 aa).

The propeptide occupies 1335-1362 (GALRYLGTPETAEMAGPEAGAIPAAVAA). Residues 1367 to 1655 (VDNVAYGIWA…QGTLKVRVNF (289 aa)) form the Autotransporter domain.

This sequence belongs to the rickettsiae OmpA/OmpB family.

It localises to the periplasm. Its subcellular location is the secreted. The protein localises to the cell surface. The protein resides in the cell outer membrane. Its function is as follows. The 120 kDa surface-exposed protein is a major structural protein which may play a role as a rickettsial virulence factor and/or immunogen during infection. The 32 kDa beta peptide may serve as a membrane anchor. It has been shown to adhere to biotinylated Vero cell proteins. This chain is Outer membrane protein B (ompB), found in Rickettsia conorii (strain ATCC VR-613 / Malish 7).